A 319-amino-acid polypeptide reads, in one-letter code: 4-hydroxy-3-methylbut-2-enyl diphosphate reductase (319 aa).

[4Fe-4S] cluster is bound at residue cysteine 12. (2E)-4-hydroxy-3-methylbut-2-enyl diphosphate contacts are provided by histidine 41 and histidine 74. The dimethylallyl diphosphate site is built by histidine 41 and histidine 74. Residues histidine 41 and histidine 74 each contribute to the isopentenyl diphosphate site. [4Fe-4S] cluster is bound at residue cysteine 96. A (2E)-4-hydroxy-3-methylbut-2-enyl diphosphate-binding site is contributed by histidine 124. Histidine 124 contributes to the dimethylallyl diphosphate binding site. Histidine 124 serves as a coordination point for isopentenyl diphosphate. Glutamate 126 (proton donor) is an active-site residue. Position 167 (threonine 167) interacts with (2E)-4-hydroxy-3-methylbut-2-enyl diphosphate. A [4Fe-4S] cluster-binding site is contributed by cysteine 197. (2E)-4-hydroxy-3-methylbut-2-enyl diphosphate contacts are provided by serine 225, serine 226, asparagine 227, and serine 269. Positions 225, 226, 227, and 269 each coordinate dimethylallyl diphosphate. Serine 225, serine 226, asparagine 227, and serine 269 together coordinate isopentenyl diphosphate.

It belongs to the IspH family. Homodimer. Requires [4Fe-4S] cluster as cofactor.

It carries out the reaction isopentenyl diphosphate + 2 oxidized [2Fe-2S]-[ferredoxin] + H2O = (2E)-4-hydroxy-3-methylbut-2-enyl diphosphate + 2 reduced [2Fe-2S]-[ferredoxin] + 2 H(+). The catalysed reaction is dimethylallyl diphosphate + 2 oxidized [2Fe-2S]-[ferredoxin] + H2O = (2E)-4-hydroxy-3-methylbut-2-enyl diphosphate + 2 reduced [2Fe-2S]-[ferredoxin] + 2 H(+). The protein operates within isoprenoid biosynthesis; dimethylallyl diphosphate biosynthesis; dimethylallyl diphosphate from (2E)-4-hydroxy-3-methylbutenyl diphosphate: step 1/1. It functions in the pathway isoprenoid biosynthesis; isopentenyl diphosphate biosynthesis via DXP pathway; isopentenyl diphosphate from 1-deoxy-D-xylulose 5-phosphate: step 6/6. Its function is as follows. Catalyzes the conversion of 1-hydroxy-2-methyl-2-(E)-butenyl 4-diphosphate (HMBPP) into a mixture of isopentenyl diphosphate (IPP) and dimethylallyl diphosphate (DMAPP). Acts in the terminal step of the DOXP/MEP pathway for isoprenoid precursor biosynthesis. This chain is 4-hydroxy-3-methylbut-2-enyl diphosphate reductase, found in Buchnera aphidicola subsp. Acyrthosiphon pisum (strain Tuc7).